Reading from the N-terminus, the 662-residue chain is Protein translocase subunit SecA 2 (662 aa).

ATP is bound by residues Q110, 128–132 (GEGKT), and D538.

It belongs to the SecA family. Monomer and homodimer. Part of the essential Sec protein translocation apparatus which comprises SecA, SecYEG and auxiliary proteins SecDF. Other proteins may also be involved.

Its subcellular location is the cell inner membrane. It localises to the cytoplasm. The catalysed reaction is ATP + H2O + cellular proteinSide 1 = ADP + phosphate + cellular proteinSide 2.. In terms of biological role, part of the Sec protein translocase complex. Interacts with the SecYEG preprotein conducting channel. Has a central role in coupling the hydrolysis of ATP to the transfer of proteins into and across the cell membrane, serving as an ATP-driven molecular motor driving the stepwise translocation of polypeptide chains across the membrane. In Chlorobium chlorochromatii (strain CaD3), this protein is Protein translocase subunit SecA 2.